The chain runs to 422 residues: UDP-N-acetylglucosamine 1-carboxyvinyltransferase (422 aa).

Residue 22–23 (KN) coordinates phosphoenolpyruvate. Arg93 provides a ligand contact to UDP-N-acetyl-alpha-D-glucosamine. Catalysis depends on Cys117, which acts as the Proton donor. Residue Cys117 is modified to 2-(S-cysteinyl)pyruvic acid O-phosphothioketal. UDP-N-acetyl-alpha-D-glucosamine contacts are provided by residues 122-126 (RPVDL), Asp308, and Leu330.

Belongs to the EPSP synthase family. MurA subfamily.

Its subcellular location is the cytoplasm. The enzyme catalyses phosphoenolpyruvate + UDP-N-acetyl-alpha-D-glucosamine = UDP-N-acetyl-3-O-(1-carboxyvinyl)-alpha-D-glucosamine + phosphate. It functions in the pathway cell wall biogenesis; peptidoglycan biosynthesis. Functionally, cell wall formation. Adds enolpyruvyl to UDP-N-acetylglucosamine. The sequence is that of UDP-N-acetylglucosamine 1-carboxyvinyltransferase from Helicobacter pylori (strain HPAG1).